A 571-amino-acid polypeptide reads, in one-letter code: Methionine--tRNA ligase (571 aa).

The 'HIGH' region motif lies at 10–20 (PYVNAVPHLGN). The Zn(2+) site is built by Cys143, Cys146, Cys156, and Cys159. A 'KMSKS' region motif is present at residues 333–337 (KFSKS). An ATP-binding site is contributed by Lys336.

Belongs to the class-I aminoacyl-tRNA synthetase family. MetG type 1 subfamily. The cofactor is Zn(2+).

It is found in the cytoplasm. The catalysed reaction is tRNA(Met) + L-methionine + ATP = L-methionyl-tRNA(Met) + AMP + diphosphate. Functionally, is required not only for elongation of protein synthesis but also for the initiation of all mRNA translation through initiator tRNA(fMet) aminoacylation. The protein is Methionine--tRNA ligase of Sulfolobus acidocaldarius (strain ATCC 33909 / DSM 639 / JCM 8929 / NBRC 15157 / NCIMB 11770).